A 712-amino-acid polypeptide reads, in one-letter code: Small ribosomal subunit protein uS3c (712 aa).

The S3-like 1st part stretch occupies residues 1–118; it reads MGQKVHPLGF…IKVSKDLVTN (118 aa). The intervening sequence (IVS) stretch occupies residues 119-580; sequence LQKTRKYLFK…LQTAFLTQIE (462 aa). Residues 581 to 712 are S3-like 2nd part; that stretch reads SQRKMYKANL…VWIFKGYSKI (132 aa).

The protein belongs to the universal ribosomal protein uS3 family. In terms of assembly, part of the 30S ribosomal subunit.

It is found in the plastid. The protein localises to the chloroplast. This Chlamydomonas reinhardtii (Chlamydomonas smithii) protein is Small ribosomal subunit protein uS3c (rps3).